The following is a 231-amino-acid chain: 2-C-methyl-D-erythritol 4-phosphate cytidylyltransferase (231 aa).

This sequence belongs to the IspD/TarI cytidylyltransferase family. IspD subfamily.

It catalyses the reaction 2-C-methyl-D-erythritol 4-phosphate + CTP + H(+) = 4-CDP-2-C-methyl-D-erythritol + diphosphate. Its pathway is isoprenoid biosynthesis; isopentenyl diphosphate biosynthesis via DXP pathway; isopentenyl diphosphate from 1-deoxy-D-xylulose 5-phosphate: step 2/6. Catalyzes the formation of 4-diphosphocytidyl-2-C-methyl-D-erythritol from CTP and 2-C-methyl-D-erythritol 4-phosphate (MEP). The chain is 2-C-methyl-D-erythritol 4-phosphate cytidylyltransferase from Xylella fastidiosa (strain M23).